An 863-amino-acid polypeptide reads, in one-letter code: Leucine--tRNA ligase (863 aa).

Positions Pro-41–His-51 match the 'HIGH' region motif. Residues Lys-627–Ser-631 carry the 'KMSKS' region motif. Lys-630 contacts ATP.

It belongs to the class-I aminoacyl-tRNA synthetase family.

The protein localises to the cytoplasm. The catalysed reaction is tRNA(Leu) + L-leucine + ATP = L-leucyl-tRNA(Leu) + AMP + diphosphate. In Jannaschia sp. (strain CCS1), this protein is Leucine--tRNA ligase.